The sequence spans 307 residues: UDP-3-O-acyl-N-acetylglucosamine deacetylase (307 aa).

3 residues coordinate Zn(2+): His78, His241, and Asp245. The active-site Proton donor is the His268.

It belongs to the LpxC family. The cofactor is Zn(2+).

It carries out the reaction a UDP-3-O-[(3R)-3-hydroxyacyl]-N-acetyl-alpha-D-glucosamine + H2O = a UDP-3-O-[(3R)-3-hydroxyacyl]-alpha-D-glucosamine + acetate. The protein operates within glycolipid biosynthesis; lipid IV(A) biosynthesis; lipid IV(A) from (3R)-3-hydroxytetradecanoyl-[acyl-carrier-protein] and UDP-N-acetyl-alpha-D-glucosamine: step 2/6. Its function is as follows. Catalyzes the hydrolysis of UDP-3-O-myristoyl-N-acetylglucosamine to form UDP-3-O-myristoylglucosamine and acetate, the committed step in lipid A biosynthesis. The protein is UDP-3-O-acyl-N-acetylglucosamine deacetylase of Bordetella avium (strain 197N).